The following is a 333-amino-acid chain: Probable cytosolic iron-sulfur protein assembly protein 1 (333 aa).

7 WD repeats span residues 12 to 50 (LHDD…IIEE), 55 to 94 (AHKK…YNDE), 107 to 146 (GHEN…EEFE), 153 to 192 (EHSQ…WECC), 197 to 238 (GHEG…GEYE), 250 to 288 (AHTR…WIVE), and 298 to 333 (YETN…FDEN).

Belongs to the WD repeat CIA1 family. In terms of assembly, interacts with NAR1.

It localises to the cytoplasm. The protein localises to the nucleus. Its function is as follows. Essential component of the cytosolic iron-sulfur (Fe/S) protein assembly machinery. Required for the maturation of extramitochondrial Fe/S proteins. The chain is Probable cytosolic iron-sulfur protein assembly protein 1 from Kluyveromyces lactis (strain ATCC 8585 / CBS 2359 / DSM 70799 / NBRC 1267 / NRRL Y-1140 / WM37) (Yeast).